Here is a 217-residue protein sequence, read N- to C-terminus: Thiamine-phosphate synthase (217 aa).

Residues Q39–K43 and N71 contribute to the 4-amino-2-methyl-5-(diphosphooxymethyl)pyrimidine site. 2 residues coordinate Mg(2+): D72 and D91. T110 is a 4-amino-2-methyl-5-(diphosphooxymethyl)pyrimidine binding site. S137–T139 is a 2-[(2R,5Z)-2-carboxy-4-methylthiazol-5(2H)-ylidene]ethyl phosphate binding site. Residue K140 coordinates 4-amino-2-methyl-5-(diphosphooxymethyl)pyrimidine. Residue G167 coordinates 2-[(2R,5Z)-2-carboxy-4-methylthiazol-5(2H)-ylidene]ethyl phosphate.

Belongs to the thiamine-phosphate synthase family. The cofactor is Mg(2+).

It catalyses the reaction 2-[(2R,5Z)-2-carboxy-4-methylthiazol-5(2H)-ylidene]ethyl phosphate + 4-amino-2-methyl-5-(diphosphooxymethyl)pyrimidine + 2 H(+) = thiamine phosphate + CO2 + diphosphate. The catalysed reaction is 2-(2-carboxy-4-methylthiazol-5-yl)ethyl phosphate + 4-amino-2-methyl-5-(diphosphooxymethyl)pyrimidine + 2 H(+) = thiamine phosphate + CO2 + diphosphate. The enzyme catalyses 4-methyl-5-(2-phosphooxyethyl)-thiazole + 4-amino-2-methyl-5-(diphosphooxymethyl)pyrimidine + H(+) = thiamine phosphate + diphosphate. The protein operates within cofactor biosynthesis; thiamine diphosphate biosynthesis; thiamine phosphate from 4-amino-2-methyl-5-diphosphomethylpyrimidine and 4-methyl-5-(2-phosphoethyl)-thiazole: step 1/1. Its function is as follows. Condenses 4-methyl-5-(beta-hydroxyethyl)thiazole monophosphate (THZ-P) and 2-methyl-4-amino-5-hydroxymethyl pyrimidine pyrophosphate (HMP-PP) to form thiamine monophosphate (TMP). The chain is Thiamine-phosphate synthase from Saccharophagus degradans (strain 2-40 / ATCC 43961 / DSM 17024).